A 690-amino-acid chain; its full sequence is Elongation factor G (690 aa).

Residues 8–283 (SRCRNIGIMA…AVVDFLPSPS (276 aa)) enclose the tr-type G domain. GTP contacts are provided by residues 17 to 24 (AHIDAGKT), 81 to 85 (DTPGH), and 135 to 138 (NKMD).

It belongs to the TRAFAC class translation factor GTPase superfamily. Classic translation factor GTPase family. EF-G/EF-2 subfamily.

The protein resides in the cytoplasm. Catalyzes the GTP-dependent ribosomal translocation step during translation elongation. During this step, the ribosome changes from the pre-translocational (PRE) to the post-translocational (POST) state as the newly formed A-site-bound peptidyl-tRNA and P-site-bound deacylated tRNA move to the P and E sites, respectively. Catalyzes the coordinated movement of the two tRNA molecules, the mRNA and conformational changes in the ribosome. This chain is Elongation factor G, found in Anaplasma marginale (strain St. Maries).